The chain runs to 467 residues: Coiled-coil domain-containing protein 174 (467 aa).

Disordered regions lie at residues 47-76 and 129-163; these read INKK…LEEQ and GATR…SEEW. The span at 64-76 shows a compositional bias: basic and acidic residues; sequence RAEKDAEQKLEEQ. Positions 64-99 form a coiled coil; sequence RAEKDAEQKLEEQKTLDKAREKLEEKAKLYEKMTKG. Residues 136-147 are compositionally biased toward acidic residues; the sequence is IEEERDDDDKEE. A Phosphoserine modification is found at Ser-198. Residues 268-310 are a coiled coil; the sequence is LEMLREQTTDQRIKRENIKEKRKAMLEARLAKLRQKKMKKSKE. Disordered regions lie at residues 301-365 and 379-454; these read RQKK…IREW and KQSE…VTFQ. Basic and acidic residues-rich tracts occupy residues 349–365 and 379–390; these read IQER…IREW and KQSELRAERDPE. The span at 406 to 415 shows a compositional bias: polar residues; sequence PMSSQPQSRP. Residues 423–446 are compositionally biased toward low complexity; the sequence is GHSSGQSQEPSSSHTSTPASESSP.

The protein resides in the nucleus. Functionally, probably involved in neuronal development. In Mus musculus (Mouse), this protein is Coiled-coil domain-containing protein 174 (Ccdc174).